Here is a 253-residue protein sequence, read N- to C-terminus: MDIIICKDEQEVGKAAAALIAPFATKGGTLGLATGSSPLSTYQELIRMYEAGEVSFKNCKAFLLDEYVGLTRDDENSYFKTIRKEFTDHIDIVDEEVYSPDGANPDPYEAAAEYEAKIAAESVDVQILGIGGNGHIAFNEPSSSLSGLTKVQALHPKTVEDNARFFNTIEEVPTHALTQGLGTLSRAQNIVLVATGEGKADAIRGTVEGPLTAMCPGSILQMHNNATIIVDEAAASKLENADHYRLMEQLKLR.

Residue Asp-65 is the Proton acceptor; for enolization step of the active site. The active-site For ring-opening step is Asn-133. The active-site Proton acceptor; for ring-opening step is the His-135. Glu-140 (for ring-opening step) is an active-site residue.

Belongs to the glucosamine/galactosamine-6-phosphate isomerase family. NagB subfamily.

The enzyme catalyses alpha-D-glucosamine 6-phosphate + H2O = beta-D-fructose 6-phosphate + NH4(+). It participates in amino-sugar metabolism; N-acetylneuraminate degradation; D-fructose 6-phosphate from N-acetylneuraminate: step 5/5. Functionally, catalyzes the reversible isomerization-deamination of glucosamine 6-phosphate (GlcN6P) to form fructose 6-phosphate (Fru6P) and ammonium ion. The protein is Glucosamine-6-phosphate deaminase of Corynebacterium glutamicum (strain ATCC 13032 / DSM 20300 / JCM 1318 / BCRC 11384 / CCUG 27702 / LMG 3730 / NBRC 12168 / NCIMB 10025 / NRRL B-2784 / 534).